The sequence spans 360 residues: Mannitol-1-phosphate 5-dehydrogenase (360 aa).

6 to 17 contacts NAD(+); it reads ALHFGAGNIGRG.

It belongs to the mannitol dehydrogenase family.

The catalysed reaction is D-mannitol 1-phosphate + NAD(+) = beta-D-fructose 6-phosphate + NADH + H(+). The chain is Mannitol-1-phosphate 5-dehydrogenase from Mycoplasmopsis pulmonis (strain UAB CTIP) (Mycoplasma pulmonis).